Here is a 423-residue protein sequence, read N- to C-terminus: Protein CLP1 homolog (423 aa).

ATP contacts are provided by residues glutamate 16, lysine 57, and 119-124; that span reads DVGKST.

It belongs to the Clp1 family. Clp1 subfamily.

The protein resides in the nucleus. Functionally, required for endonucleolytic cleavage during polyadenylation-dependent pre-mRNA 3'-end formation. In Drosophila yakuba (Fruit fly), this protein is Protein CLP1 homolog (cbc).